The primary structure comprises 518 residues: Circadian clock oscillator protein KaiC (518 aa).

Positions 1–247 (MTNLPEHQSS…FTINNGINIF (247 aa)) constitute a KaiC 1 domain. 7 residues coordinate ATP: S49, G50, T51, G52, K53, T54, and L55. Residue T54 coordinates Mg(2+). The active-site Proton acceptor in CI (KaiC 1) is the E78. An ATP-binding site is contributed by S90. Positions 116-123 (QEVAGDFD) are B-loop, required to bind KaiB and SasA. Residues K225, L226, R227, T229, and H231 each coordinate ATP. The segment at 248 to 260 (PLGAMRLTQRSSN) is linker. The KaiC 2 domain occupies 261–518 (VRVSSGVKTL…AKGMQDLESE (258 aa)). The ATP site is built by T290, G291, T292, G293, K294, T295, and L296. T295 lines the Mg(2+) pocket. E318 contacts Mg(2+). E318 (proton acceptor in CII (KaiC 2)) is an active-site residue. An ATP-binding site is contributed by W331. Residue S431 is modified to Phosphoserine; by autocatalysis. T432 bears the Phosphothreonine; by autocatalysis mark. Residues R451, K457, M458, R459, S461, H463, and K465 each contribute to the ATP site. The A-loop, interacts with KaiA stretch occupies residues 488-497 (GIISGTPTRI).

The protein belongs to the KaiC family. As to quaternary structure, homohexamer resembling 2 stacked donuts rings with a central pore nearly blocked on one side; hexamerization is dependent on ATP-binding. Binds 2 ATP per monomer, at the subunit interface on each ring. The KaiABC complex composition changes during the circadian cycle to control KaiC phosphorylation. Complexes KaiC(6), KaiA(2-4):KaiC(6), KaiB(6):KaiC(6) and KaiC(6):KaiB(6):KaiA(12) are among the most important forms, many form cooperatively. Interacts with SasA, probably as 1 SasA trimer:1 KaiC homohexamer, has highest affinity for unphosphorylated SasA. The CI domain binds to KaiB and SasA; as they have a similar fold they compete for the same site on CI. KaiB assumes a thioredoxin-like form called KaiB(fs) when bound to KaiC. The cofactor is Mg(2+). In terms of processing, phosphorylated on serine/threonine residues by autocatalysis. Both phosphorylated and unphosphorylated forms exist. Both autophosphorylates and autodephosphorylates. Phosphorylated form correlates with clock speed. Post-translationally, phosphorylated on serine and threonine residues by autocatalysis. Has a 4 step phosphorylation cycle; the autokinase acts first on Thr-432, then Ser-431. When Ser-431 is modified KaiC switches to an autophosphatase mode, acting first on phospho-Thr-432 then phospho-Ser-431.

The catalysed reaction is L-seryl-[protein] + ATP = O-phospho-L-seryl-[protein] + ADP + H(+). The enzyme catalyses L-threonyl-[protein] + ATP = O-phospho-L-threonyl-[protein] + ADP + H(+). It carries out the reaction ATP + H2O = ADP + phosphate + H(+). The interaction with KaiA enhances its phosphorylation status, while the interaction with KaiB decreases it. Functionally, central component of the KaiABC oscillator complex, which constitutes the main circadian regulator in cyanobacteria. Complex composition changes during the circadian cycle to control KaiC phosphorylation. KaiA stimulates KaiC autophosphorylation, while KaiB sequesters KaiA, leading to KaiC autodephosphorylation. Clock output pathways impact the RpaA transcriptional regulator. KaiC enhances the autophosphorylation activity of SasA, which then transfers its phosphate group to RpaA to activate it. KaiB and KaiC together enhance the phospho-RpaA dephosphatase activity of CikA. In terms of biological role, stimulates SasA autophosphorylation. Fully phosphorylated KaiC (tested with phosphomimetic Asp-431-432-Asp) is the best stimulant, requires the ATPase activity of the CII domain. Unphosphorylated SasA associates with KaiC and its autophosphorylation activity is enhanced. Phospho-SasA is released and associates with RpaA, transferring its phosphate group. Formation of the KaiA:KaiB complex is promoted by KaiC, helping switch KaiC from its autophosphorylation to autodephosphatase function. Its function is as follows. Has a weak, temperature-independent ATPase activity (about 14 molecules of ATP per day) that defines the circadian period. ATPase activity is mostly contributed by the CI domain; the CII domain augments the activity. The addition of KaiA increases activity. ATPase is inhibited during the KaiC phosphorylating phase and activated during the KaiC dephosphorylating phase. The chain is Circadian clock oscillator protein KaiC from Thermosynechococcus vestitus (strain NIES-2133 / IAM M-273 / BP-1).